The chain runs to 356 residues: Neutral protease 2 homolog UREG_03761 (356 aa).

An N-terminal signal peptide occupies residues 1–19 (MRFSSSFLSVLALASQALA). Positions 20–181 (FPLNDLPTTD…ALPEATLDKR (162 aa)) are excised as a propeptide. 2 cysteine pairs are disulfide-bonded: C189/C259 and C266/C284. H308 provides a ligand contact to Zn(2+). The active site involves E309. Residues H312 and D323 each contribute to the Zn(2+) site.

It belongs to the peptidase M35 family. Zn(2+) is required as a cofactor.

The protein localises to the secreted. It carries out the reaction Preferential cleavage of bonds with hydrophobic residues in P1'. Also 3-Asn-|-Gln-4 and 8-Gly-|-Ser-9 bonds in insulin B chain.. Its function is as follows. Secreted metalloproteinase that allows assimilation of proteinaceous substrates. Shows high activities on basic nuclear substrates such as histone and protamine. The chain is Neutral protease 2 homolog UREG_03761 from Uncinocarpus reesii (strain UAMH 1704).